Here is a 378-residue protein sequence, read N- to C-terminus: Acetylornithine deacetylase (378 aa).

His-76 provides a ligand contact to Zn(2+). Asp-78 is a catalytic residue. Asp-108 provides a ligand contact to Zn(2+). The active site involves Glu-140. Glu-141, Glu-165, and His-351 together coordinate Zn(2+).

The protein belongs to the peptidase M20A family. ArgE subfamily. As to quaternary structure, homodimer. Zn(2+) serves as cofactor. It depends on Co(2+) as a cofactor. The cofactor is glutathione.

The protein localises to the cytoplasm. It catalyses the reaction N(2)-acetyl-L-ornithine + H2O = L-ornithine + acetate. It functions in the pathway amino-acid biosynthesis; L-arginine biosynthesis; L-ornithine from N(2)-acetyl-L-ornithine (linear): step 1/1. Its function is as follows. Catalyzes the hydrolysis of the amide bond of N(2)-acetylated L-amino acids. Cleaves the acetyl group from N-acetyl-L-ornithine to form L-ornithine, an intermediate in L-arginine biosynthesis pathway, and a branchpoint in the synthesis of polyamines. This Vibrio atlanticus (strain LGP32) (Vibrio splendidus (strain Mel32)) protein is Acetylornithine deacetylase.